A 264-amino-acid polypeptide reads, in one-letter code: S-adenosylmethionine decarboxylase proenzyme (264 aa).

The active-site Schiff-base intermediate with substrate; via pyruvic acid is Ser-112. A Pyruvic acid (Ser); by autocatalysis modification is found at Ser-112. Catalysis depends on His-117, which acts as the Proton acceptor; for processing activity. The active-site Proton donor; for catalytic activity is Cys-140.

The protein belongs to the prokaryotic AdoMetDC family. Type 2 subfamily. Heterooctamer of four alpha and four beta chains arranged as a tetramer of alpha/beta heterodimers. Pyruvate serves as cofactor. In terms of processing, is synthesized initially as an inactive proenzyme. Formation of the active enzyme involves a self-maturation process in which the active site pyruvoyl group is generated from an internal serine residue via an autocatalytic post-translational modification. Two non-identical subunits are generated from the proenzyme in this reaction, and the pyruvate is formed at the N-terminus of the alpha chain, which is derived from the carboxyl end of the proenzyme. The post-translation cleavage follows an unusual pathway, termed non-hydrolytic serinolysis, in which the side chain hydroxyl group of the serine supplies its oxygen atom to form the C-terminus of the beta chain, while the remainder of the serine residue undergoes an oxidative deamination to produce ammonia and the pyruvoyl group blocking the N-terminus of the alpha chain.

It catalyses the reaction S-adenosyl-L-methionine + H(+) = S-adenosyl 3-(methylsulfanyl)propylamine + CO2. Its pathway is amine and polyamine biosynthesis; S-adenosylmethioninamine biosynthesis; S-adenosylmethioninamine from S-adenosyl-L-methionine: step 1/1. In terms of biological role, catalyzes the decarboxylation of S-adenosylmethionine to S-adenosylmethioninamine (dcAdoMet), the propylamine donor required for the synthesis of the polyamines spermine and spermidine from the diamine putrescine. The protein is S-adenosylmethionine decarboxylase proenzyme of Salmonella gallinarum (strain 287/91 / NCTC 13346).